The primary structure comprises 1700 residues: Leucine-rich repeat-containing protein 37A2 (1700 aa).

The first 35 residues, 1–35, serve as a signal peptide directing secretion; that stretch reads MSSAQCPALVCVMSRLRFWGPWPLLMWQLLWLLVK. At 36 to 1582 the chain is on the extracellular side; sequence EAQPLEWVKD…VPGYGYTDKL (1547 aa). Polar residues predominate over residues 54-65; the sequence is LGPPDSWSSHSS. Disordered stretches follow at residues 54–104, 130–156, 169–534, 559–580, 619–642, and 729–752; these read LGPP…ESTE, QQDLKDKLSPQERLPVSPKKLKKDPAQ, QLST…AQPP, TEVELSPTMKETPTQPPKKVVP, PEPTTEVGHSTPPKRTIVSPKHPE, and TKPTTEVKPSPTTEETSTQPPDLG. The LRR 1 repeat unit spans residues 137-160; that stretch reads LSPQERLPVSPKKLKKDPAQRWSL. Composition is skewed to polar residues over residues 169-189 and 223-237; these read QLSTPQSQKQTLQNEYSSTDT and ETQNPETLEDIQSSS. 2 LRR repeats span residues 230–253 and 267–290; these read LEDIQSSSLQQEAPAQLPQLLEEE and ESSMESLTLPNHEVSVQPPGEDQA. The span at 238-249 shows a compositional bias: low complexity; it reads LQQEAPAQLPQL. N-linked (GlcNAc...) asparagine glycosylation occurs at N296. Residues 307 to 326 are compositionally biased toward polar residues; it reads TITSEPTNETESSQAQQETP. Positions 358–368 are enriched in low complexity; that stretch reads SEQQQPVQPSE. Polar residues predominate over residues 433–446; it reads LVHQEATTRLSGSG. Positions 482–493 are enriched in low complexity; it reads SPEPINNENPSP. Low complexity predominate over residues 729-749; the sequence is TKPTTEVKPSPTTEETSTQPP. LRR repeat units follow at residues 864-887, 888-911, 912-935, 937-959, 963-987, and 1002-1027; these read NGTFTILNFQGNYISYIDGNVWKA, YSWTEKLILRENNLTELHKDSFEG, LLSLQYLDLSCNKIQSIERHTFEP, PFLKFINLSCNVITELSFGTFQA, MQFLHKLILNHNPLTTVEDPYLFKL, and LTTLKNILMMTVELEKLILPSHMACC. N-linked (GlcNAc...) asparagine glycosylation is present at N1079. Residues 1124–1146 form an LRR 10 repeat; sequence LPYFSAVNLDVKSLLLPFIKLPT. Composition is skewed to basic and acidic residues over residues 1182 to 1191 and 1201 to 1216; these read VGRQSIRREQ and AEEKRLGSPAPREVEQ. Disordered stretches follow at residues 1182–1227 and 1309–1328; these read VGRQ…EKLA and KTRSHVTHRTPKVKKSPKVR. Residues 1583–1603 traverse the membrane as a helical segment; the sequence is ILALIVTGILTILIILFCLIV. The Cytoplasmic segment spans residues 1604 to 1700; that stretch reads ICCHRRSLQE…TEEEESEALP (97 aa). The segment covering 1675–1685 has biased composition (basic and acidic residues); the sequence is NEDKILNRDPG. The tract at residues 1675–1700 is disordered; sequence NEDKILNRDPGDSEAPTEEEESEALP. Positions 1689 to 1700 are enriched in acidic residues; sequence APTEEEESEALP.

It belongs to the LRRC37A family.

The protein localises to the membrane. This is Leucine-rich repeat-containing protein 37A2 (LRRC37A2) from Homo sapiens (Human).